Consider the following 253-residue polypeptide: Zinc finger protein GIS (253 aa).

Over residues 1–10 the composition is skewed to acidic residues; sequence MDEATGETET. The interval 1–85 is disordered; that stretch reads MDEATGETET…GDNSTDNNSI (85 aa). Polar residues-rich tracts occupy residues 11–21, 49–63, and 76–85; these read QDFMNVESFSQ, SITT…PYQT, and GDNSTDNNSI. The segment at 91-113 adopts a C2H2-type zinc-finger fold; that stretch reads FECHYCFRNFPTSQALGGHQNAH.

As to expression, expressed in inflorescence meristems, floral meristems and stem epidermis.

It is found in the nucleus. Probable transcription factor required for the initiation of inflorescence trichomes in response to gibberellin (GA). Mediates the induction of GL1 expression by GA in inflorescence organs and is antagonized in its action by the DELLA repressor GAI. Acts upstream of the trichome initiation regulators GL1 and GL3, and downstream of the GA signaling repressor SPINDLY (SPY). Does not play a significant role in the cytokinin response. Controls trichome branching through GA signaling. Acts downstream of the key regulator STICHEL (STI) in an endoreduplication-independent pathway. Controls trichome cell division indirectly by acting downstream of a key endoreduplication regulator SIAMESE (SIM). This is Zinc finger protein GIS (GIS) from Arabidopsis thaliana (Mouse-ear cress).